A 127-amino-acid chain; its full sequence is Small ribosomal subunit protein uS13 (127 aa).

Residues 93–127 (RRSLPVRGQRTHTNARTRKGPRKGTVANKKKATAK) are disordered.

This sequence belongs to the universal ribosomal protein uS13 family. As to quaternary structure, part of the 30S ribosomal subunit. Forms a loose heterodimer with protein S19. Forms two bridges to the 50S subunit in the 70S ribosome.

Functionally, located at the top of the head of the 30S subunit, it contacts several helices of the 16S rRNA. In the 70S ribosome it contacts the 23S rRNA (bridge B1a) and protein L5 of the 50S subunit (bridge B1b), connecting the 2 subunits; these bridges are implicated in subunit movement. Contacts the tRNAs in the A and P-sites. This chain is Small ribosomal subunit protein uS13, found in Koribacter versatilis (strain Ellin345).